The sequence spans 418 residues: Beta-arrestin-1 (418 aa).

The interaction with SRC stretch occupies residues 1-163; sequence MGDKGTRVFK…LEEKIHKRNS (163 aa). The interaction with CHRM2 stretch occupies residues 45–86; the sequence is PEYLKERRVYVTLTCAFRYGREDLDVLGLTFRKDLFVANVQS. The residue at position 47 (Tyr47) is a Phosphotyrosine. The 1D-myo-inositol hexakisphosphate site is built by Lys250, Met255, Lys324, and Lys326. The interaction with TRAF6 stretch occupies residues 318–418; sequence IVSYKVKVKL…GTGSPQLNNR (101 aa). Positions 353 to 375 are disordered; it reads HPKPKEEPPHREVPENETPVDTN. Positions 355–366 are enriched in basic and acidic residues; the sequence is KPKEEPPHREVP. The short motif at 385 to 395 is the [DE]-X(1,2)-F-X-X-[FL]-X-X-X-R motif element; the sequence is DIVFEDFARQR. The segment at 397–418 is disordered; the sequence is KGMKDDKEEEEDGTGSPQLNNR. Phosphoserine; by GRK5 is present on Ser412.

Belongs to the arrestin family. As to quaternary structure, monomer. Homodimer. Homooligomer; the self-association is mediated by InsP6-binding. Heterooligomer with ARRB2; the association is mediated by InsP6-binding. Interacts with GPR143. Interacts with ADRB2 (phosphorylated). Interacts with CHRM2 (phosphorylated). Interacts with LHCGR. Interacts with CYTH2 and CASR. Interacts with AP2B1 (dephosphorylated at 'Tyr-737'); phosphorylation of AP2B1 at 'Tyr-737' disrupts the interaction. Interacts (dephosphorylated at Ser-412) with CLTC. Interacts with CCR2 and GRK2. Interacts with CRR5. Interacts with PTAFR (phosphorylated on serine residues). Interacts with CLTC and MAP2K3. Interacts with CREB1. Interacts with TRAF6. Interacts with IGF1R and MDM2. Interacts with C5AR1. Interacts with PDE4D. Interacts with SRC (via the SH3 domain and the protein kinase domain); the interaction is independent of the phosphorylation state of SRC C-terminus. Interacts with TACR1. Interacts with RAF1. Interacts with CHUK, IKBKB and MAP3K14. Interacts with DVL1; the interaction is enhanced by phosphorylation of DVL1. Interacts with DVL2; the interaction is enhanced by phosphorylation of DVL2. Interacts with IGF1R. Associates with MAP kinase p38. Part of a MAPK signaling complex consisting of TACR1, ARRB1, SRC, MAPK1 (activated) and MAPK3 (activated). Part of a MAPK signaling complex consisting of F2RL1, ARRB1, RAF1, MAPK1 (activated) and MAPK3 (activated). Interacts with MAP2K4/MKK4. Interacts with HCK and CXCR1 (phosphorylated). Interacts with ACKR3 and ACKR4. Interacts with ARRDC1; the interaction is direct. Interacts with GPR61, GPR62 and GPR135. In terms of processing, constitutively phosphorylated at Ser-412 in the cytoplasm. At the plasma membrane, is rapidly dephosphorylated, a process that is required for clathrin binding and ADRB2 endocytosis but not for ADRB2 binding and desensitization. Once internalized, is rephosphorylated. The ubiquitination status appears to regulate the formation and trafficking of beta-arrestin-GPCR complexes and signaling. Ubiquitination appears to occur GPCR-specific. Ubiquitinated by MDM2; the ubiquitination is required for rapid internalization of ADRB2. Deubiquitinated by USP33; the deubiquitination leads to a dissociation of the beta-arrestin-GPCR complex. Stimulation of a class A GPCR, such as ADRB2, induces transient ubiquitination and subsequently promotes association with USP33.

The protein localises to the cytoplasm. Its subcellular location is the nucleus. It is found in the cell membrane. The protein resides in the membrane. It localises to the clathrin-coated pit. The protein localises to the cell projection. Its subcellular location is the pseudopodium. It is found in the cytoplasmic vesicle. Functionally, functions in regulating agonist-mediated G-protein coupled receptor (GPCR) signaling by mediating both receptor desensitization and resensitization processes. During homologous desensitization, beta-arrestins bind to the GPRK-phosphorylated receptor and sterically preclude its coupling to the cognate G-protein; the binding appears to require additional receptor determinants exposed only in the active receptor conformation. The beta-arrestins target many receptors for internalization by acting as endocytic adapters (CLASPs, clathrin-associated sorting proteins) and recruiting the GPRCs to the adapter protein 2 complex 2 (AP-2) in clathrin-coated pits (CCPs). However, the extent of beta-arrestin involvement appears to vary significantly depending on the receptor, agonist and cell type. Internalized arrestin-receptor complexes traffic to intracellular endosomes, where they remain uncoupled from G-proteins. Two different modes of arrestin-mediated internalization occur. Class A receptors, like ADRB2, OPRM1, ENDRA, D1AR and ADRA1B dissociate from beta-arrestin at or near the plasma membrane and undergo rapid recycling. Class B receptors, like AVPR2, AGTR1, NTSR1, TRHR and TACR1 internalize as a complex with arrestin and traffic with it to endosomal vesicles, presumably as desensitized receptors, for extended periods of time. Receptor resensitization then requires that receptor-bound arrestin is removed so that the receptor can be dephosphorylated and returned to the plasma membrane. Involved in internalization of P2RY4 and UTP-stimulated internalization of P2RY2. Involved in phosphorylation-dependent internalization of OPRD1 ands subsequent recycling. Involved in the degradation of cAMP by recruiting cAMP phosphodiesterases to ligand-activated receptors. Beta-arrestins function as multivalent adapter proteins that can switch the GPCR from a G-protein signaling mode that transmits short-lived signals from the plasma membrane via small molecule second messengers and ion channels to a beta-arrestin signaling mode that transmits a distinct set of signals that are initiated as the receptor internalizes and transits the intracellular compartment. Acts as a signaling scaffold for MAPK pathways such as MAPK1/3 (ERK1/2). ERK1/2 activated by the beta-arrestin scaffold is largely excluded from the nucleus and confined to cytoplasmic locations such as endocytic vesicles, also called beta-arrestin signalosomes. Recruits c-Src/SRC to ADRB2 resulting in ERK activation. GPCRs for which the beta-arrestin-mediated signaling relies on both ARRB1 and ARRB2 (codependent regulation) include ADRB2, F2RL1 and PTH1R. For some GPCRs the beta-arrestin-mediated signaling relies on either ARRB1 or ARRB2 and is inhibited by the other respective beta-arrestin form (reciprocal regulation). Inhibits ERK1/2 signaling in AGTR1- and AVPR2-mediated activation (reciprocal regulation). Is required for SP-stimulated endocytosis of NK1R and recruits c-Src/SRC to internalized NK1R resulting in ERK1/2 activation, which is required for the antiapoptotic effects of SP. Is involved in proteinase-activated F2RL1-mediated ERK activity. Acts as a signaling scaffold for the AKT1 pathway. Is involved in alpha-thrombin-stimulated AKT1 signaling. Is involved in IGF1-stimulated AKT1 signaling leading to increased protection from apoptosis. Involved in activation of the p38 MAPK signaling pathway and in actin bundle formation. Involved in F2RL1-mediated cytoskeletal rearrangement and chemotaxis. Involved in AGTR1-mediated stress fiber formation by acting together with GNAQ to activate RHOA. Appears to function as signaling scaffold involved in regulation of MIP-1-beta-stimulated CCR5-dependent chemotaxis. Involved in attenuation of NF-kappa-B-dependent transcription in response to GPCR or cytokine stimulation by interacting with and stabilizing CHUK. May serve as nuclear messenger for GPCRs. Involved in OPRD1-stimulated transcriptional regulation by translocating to CDKN1B and FOS promoter regions and recruiting EP300 resulting in acetylation of histone H4. Involved in regulation of LEF1 transcriptional activity via interaction with DVL1 and/or DVL2 Also involved in regulation of receptors other than GPCRs. Involved in Toll-like receptor and IL-1 receptor signaling through the interaction with TRAF6 which prevents TRAF6 autoubiquitination and oligomerization required for activation of NF-kappa-B and JUN. Binds phosphoinositides. Binds inositolhexakisphosphate (InsP6). Involved in IL8-mediated granule release in neutrophils. Required for atypical chemokine receptor ACKR2-induced RAC1-LIMK1-PAK1-dependent phosphorylation of cofilin (CFL1) and for the up-regulation of ACKR2 from endosomal compartment to cell membrane, increasing its efficiency in chemokine uptake and degradation. Involved in the internalization of the atypical chemokine receptor ACKR3. Negatively regulates the NOTCH signaling pathway by mediating the ubiquitination and degradation of NOTCH1 by ITCH. Participates in the recruitment of the ubiquitin-protein ligase to the receptor. In Homo sapiens (Human), this protein is Beta-arrestin-1 (ARRB1).